The sequence spans 109 residues: Transcription initiation factor IIA subunit 2 (109 aa).

It belongs to the TFIIA subunit 2 family. As to quaternary structure, TFIIA is a heterodimer of the large unprocessed subunit 1 and a small subunit gamma. It was originally believed to be a heterotrimer of an alpha (p35), a beta (p19) and a gamma subunit (p12). Interacts with NCOA6 general coactivator. TFIIA forms a complex with TBP. Interacts with HSF1 (via transactivation domain). Part of TBP-based Pol II pre-initiation complex (PIC), in which Pol II core assembles with general transcription factors and other specific initiation factors including GTF2E1, GTF2E2, GTF2F1, GTF2F2, TCEA1, ERCC2, ERCC3, GTF2H2, GTF2H3, GTF2H4, GTF2H5, GTF2A1, GTF2A2, GTF2B and TBP; this large multi-subunit PIC complex mediates DNA unwinding and targets Pol II core to the transcription start site where the first phosphodiester bond forms.

It is found in the nucleus. Its function is as follows. TFIIA is a component of the transcription machinery of RNA polymerase II and plays an important role in transcriptional activation. TFIIA in a complex with TBP mediates transcriptional activity. This Rattus norvegicus (Rat) protein is Transcription initiation factor IIA subunit 2 (Gtf2a2).